The chain runs to 379 residues: L-lactate dehydrogenase (379 aa).

One can recognise an FMN hydroxy acid dehydrogenase domain in the interval 1 to 379 (MIISASTDYR…LSRDSLVKIP (379 aa)). A substrate-binding site is contributed by Y24. S106 and Q127 together coordinate FMN. Y129 is a binding site for substrate. T155 contributes to the FMN binding site. R164 contacts substrate. FMN is bound at residue K251. H275 (proton acceptor) is an active-site residue. Position 278 (R278) interacts with substrate. Residue 306–330 (DSGIRTGLDVVRMLALGADCTLLGR) participates in FMN binding.

The protein belongs to the FMN-dependent alpha-hydroxy acid dehydrogenase family. FMN serves as cofactor.

The protein resides in the cell inner membrane. It carries out the reaction (S)-lactate + A = pyruvate + AH2. Catalyzes the conversion of L-lactate to pyruvate. Is coupled to the respiratory chain. The protein is L-lactate dehydrogenase of Vibrio parahaemolyticus serotype O3:K6 (strain RIMD 2210633).